The following is a 45-amino-acid chain: Lysis protein for colicin E1* (45 aa).

The signal sequence occupies residues 1 to 17 (MRKRFFVGIFAINLLVG). Residue Cys-18 is the site of N-palmitoyl cysteine attachment. Cys-18 carries the S-diacylglycerol cysteine lipid modification.

It is found in the cell outer membrane. Functionally, lysis proteins are required for both colicin release and partial cell lysis. The chain is Lysis protein for colicin E1* (kil) from Shigella sonnei.